A 123-amino-acid chain; its full sequence is D-ribose pyranase (123 aa).

H20 acts as the Proton donor in catalysis. Residues D28, H90, and Y112–N114 contribute to the substrate site.

This sequence belongs to the RbsD / FucU family. RbsD subfamily. As to quaternary structure, homodecamer.

It is found in the cytoplasm. It carries out the reaction beta-D-ribopyranose = beta-D-ribofuranose. The protein operates within carbohydrate metabolism; D-ribose degradation; D-ribose 5-phosphate from beta-D-ribopyranose: step 1/2. In terms of biological role, catalyzes the interconversion of beta-pyran and beta-furan forms of D-ribose. The polypeptide is D-ribose pyranase (Corynebacterium glutamicum (strain R)).